The sequence spans 464 residues: Trehalose-6-phosphate synthase (464 aa).

Arg-10 lines the D-glucose 6-phosphate pocket. 23–24 (GG) contributes to the UDP-alpha-D-glucose binding site. The D-glucose 6-phosphate site is built by Tyr-81 and Asp-135. Residues Arg-268 and Lys-273 each contribute to the UDP-alpha-D-glucose site. Arg-306 serves as a coordination point for D-glucose 6-phosphate. UDP-alpha-D-glucose is bound at residue 371–375 (LVAKE).

The protein belongs to the glycosyltransferase 20 family. As to quaternary structure, homotetramer.

The enzyme catalyses D-glucose 6-phosphate + UDP-alpha-D-glucose = alpha,alpha-trehalose 6-phosphate + UDP + H(+). Its pathway is glycan biosynthesis; trehalose biosynthesis. In terms of biological role, probably involved in the osmoprotection via the biosynthesis of trehalose. Catalyzes the transfer of glucose from UDP-alpha-D-glucose (UDP-Glc) to D-glucose 6-phosphate (Glc-6-P) to form trehalose-6-phosphate. Acts with retention of the anomeric configuration of the UDP-sugar donor. This chain is Trehalose-6-phosphate synthase, found in Sinorhizobium fredii (strain NBRC 101917 / NGR234).